The following is a 217-amino-acid chain: Peptide deformylase (217 aa).

Residues cysteine 91 and histidine 133 each contribute to the Fe cation site. Glutamate 134 is a catalytic residue. A Fe cation-binding site is contributed by histidine 137. Residues 153-217 are disordered; that stretch reads VSEDGEEEEE…RRGSAAAKEE (65 aa). A compositionally biased stretch (acidic residues) spans 155-176; the sequence is EDGEEEEEAEVAEVMPEPEAEG. Residues 177 to 192 show a composition bias toward low complexity; that stretch reads AGEPSAEGAGQAAAEA. A compositionally biased stretch (basic and acidic residues) spans 206 to 217; sequence GERRGSAAAKEE.

It belongs to the polypeptide deformylase family. Fe(2+) serves as cofactor.

It carries out the reaction N-terminal N-formyl-L-methionyl-[peptide] + H2O = N-terminal L-methionyl-[peptide] + formate. In terms of biological role, removes the formyl group from the N-terminal Met of newly synthesized proteins. Requires at least a dipeptide for an efficient rate of reaction. N-terminal L-methionine is a prerequisite for activity but the enzyme has broad specificity at other positions. This chain is Peptide deformylase, found in Symbiobacterium thermophilum (strain DSM 24528 / JCM 14929 / IAM 14863 / T).